Here is a 721-residue protein sequence, read N- to C-terminus: Glucans biosynthesis glucosyltransferase H (721 aa).

7 consecutive transmembrane segments (helical) span residues 54 to 74 (LIMVATAVLSAAGIYEMYQVL), 85 to 105 (VVLVLFAALFAWVALSFVSAL), 404 to 424 (GIGAYLTAPMWLAFLVAGILI), 458 to 478 (FAGTMGLLILPKLLALLLVLI), 493 to 513 (FGGVLLETMISALTAPVMMVF), 548 to 568 (YALPTALGATMAVGAWLVSWP), and 569 to 589 (LLLWMTPVIVGLLLAIPVALL).

This sequence belongs to the glycosyltransferase 2 family. OpgH subfamily.

The protein localises to the cell inner membrane. Its pathway is glycan metabolism; osmoregulated periplasmic glucan (OPG) biosynthesis. Its function is as follows. Involved in the biosynthesis of osmoregulated periplasmic glucans (OPGs). The polypeptide is Glucans biosynthesis glucosyltransferase H (Rhodopseudomonas palustris (strain TIE-1)).